The primary structure comprises 140 residues: Large ribosomal subunit protein uL11 (140 aa).

Belongs to the universal ribosomal protein uL11 family. As to quaternary structure, part of the ribosomal stalk of the 50S ribosomal subunit. Interacts with L10 and the large rRNA to form the base of the stalk. L10 forms an elongated spine to which L12 dimers bind in a sequential fashion forming a multimeric L10(L12)X complex. One or more lysine residues are methylated.

In terms of biological role, forms part of the ribosomal stalk which helps the ribosome interact with GTP-bound translation factors. The chain is Large ribosomal subunit protein uL11 from Geobacter sp. (strain M21).